Reading from the N-terminus, the 306-residue chain is MPIVIPKDLPATETLENENIFVITEHRAIHQDIRPLKIAIVNLMPKKIETETQLLRLLGNIPIQVSIDLIHPKTHHSKNISEKHLLSFYKTIDDIKNEKFDGMIITGAPVEQIAFEDVDYFQELKTIMDFSVTNVFSTLHICWGAQAALYYHYNINKNILPKKVFGVFSHHININKGTVKLLRGFDDKFYVPHSRHTEVKKEDIEKVPELEIFAESNEVGPYIIASKNGRQIFITGHPEYDANTLKSEYYRDINLGKHIEIPKNYFKNNNPREELIANWRGHANLLFSNWLNYYVYQETPYSYISI.

The active-site Acyl-thioester intermediate is C142. The substrate site is built by K163 and S194. H237 acts as the Proton acceptor in catalysis. The active site involves E239. Substrate is bound at residue R251.

It belongs to the MetA family.

The protein resides in the cytoplasm. The enzyme catalyses L-homoserine + acetyl-CoA = O-acetyl-L-homoserine + CoA. The protein operates within amino-acid biosynthesis; L-methionine biosynthesis via de novo pathway; O-acetyl-L-homoserine from L-homoserine: step 1/1. Functionally, transfers an acetyl group from acetyl-CoA to L-homoserine, forming acetyl-L-homoserine. The sequence is that of Homoserine O-acetyltransferase from Clostridium tetani (strain Massachusetts / E88).